The sequence spans 232 residues: Large ribosomal subunit protein uL1 (232 aa).

This sequence belongs to the universal ribosomal protein uL1 family. In terms of assembly, part of the 50S ribosomal subunit.

Its function is as follows. Binds directly to 23S rRNA. The L1 stalk is quite mobile in the ribosome, and is involved in E site tRNA release. Protein L1 is also a translational repressor protein, it controls the translation of the L11 operon by binding to its mRNA. In Burkholderia vietnamiensis (strain G4 / LMG 22486) (Burkholderia cepacia (strain R1808)), this protein is Large ribosomal subunit protein uL1.